The sequence spans 244 residues: Glutathione S-transferase theta-2B (244 aa).

A GST N-terminal domain is found at 2–82 (GLELFLDLVS…YLSCKYQTPD (81 aa)). Glutathione contacts are provided by residues 40 to 41 (HK), 53 to 54 (KL), 66 to 67 (ES), and 104 to 107 (DCIR). In terms of domain architecture, GST C-terminal spans 88-224 (DLQARARVHE…SILEQAAKKT (137 aa)).

The protein belongs to the GST superfamily. Theta family. As to quaternary structure, homodimer. Expressed at low levels in liver. In lung, expressed at low levels in ciliated bronchiolar cells, alveolar macrophages and alveolar type II cells.

Its subcellular location is the cytoplasm. It is found in the cytosol. The enzyme catalyses RX + glutathione = an S-substituted glutathione + a halide anion + H(+). Conjugation of reduced glutathione to a wide number of exogenous and endogenous hydrophobic electrophiles. Has a sulfatase activity. This chain is Glutathione S-transferase theta-2B (GSTT2B), found in Homo sapiens (Human).